A 381-amino-acid polypeptide reads, in one-letter code: Prostatic acid phosphatase (381 aa).

The N-terminal stretch at 1–31 (MRAVPLPLSRTASLSLGFLLLLSLCLDPGQA) is a signal peptide. A substrate-binding site is contributed by arginine 42. The active-site Nucleophile is histidine 43. Arginine 46 provides a ligand contact to substrate. Asparagine 93 carries an N-linked (GlcNAc...) asparagine glycan. Residue arginine 110 participates in substrate binding. 3 cysteine pairs are disulfide-bonded: cysteine 160/cysteine 371, cysteine 214/cysteine 312, and cysteine 346/cysteine 350. Residue asparagine 219 is glycosylated (N-linked (GlcNAc...) asparagine). Histidine 288 is a binding site for substrate. The active-site Proton donor is the aspartate 289. The N-linked (GlcNAc...) asparagine glycan is linked to asparagine 332.

The protein belongs to the histidine acid phosphatase family. As to quaternary structure, homodimer; dimer formation is required for phosphatase activity. In terms of tissue distribution, expressed in salivary gland, thymus and thyroid gland. As to expression, widely expressed in prostate lobes, brain, kidney, liver, lung, muscle, placenta, salivary gland, spleen, thyroid and thymus. Locates to Schwann cells and fibroblasts. Expressed in peptidergic and non-peptidergic nociceptive (pain-sensing) neurons. Preferentially expressed in non-peptidergic doral root ganglia neurons.

It localises to the secreted. The protein resides in the cell membrane. It is found in the lysosome membrane. It carries out the reaction a phosphate monoester + H2O = an alcohol + phosphate. The catalysed reaction is a ribonucleoside 5'-phosphate + H2O = a ribonucleoside + phosphate. The enzyme catalyses 1-(9Z-octadecenoyl)-sn-glycero-3-phosphate + H2O = 1-(9Z-octadecenoyl)-sn-glycerol + phosphate. It catalyses the reaction O-phospho-L-tyrosyl-[protein] + H2O = L-tyrosyl-[protein] + phosphate. A non-specific tyrosine phosphatase that dephosphorylates a diverse number of substrates under acidic conditions (pH 4-6) including alkyl, aryl, and acyl orthophosphate monoesters and phosphorylated proteins. Has lipid phosphatase activity and inactivates lysophosphatidic acid in seminal plasma. Its function is as follows. In addition to its tyrosine phosphatase activity, also has ecto-5'-nucleotidase activity in dorsal root ganglion (DRG) neurons. Generates adenosine from AMP. This extracellular adenosine leads to a decrease in chronic pain by activating A1R in nociceptive neurons. This is Prostatic acid phosphatase (Acp3) from Mus musculus (Mouse).